The following is a 232-amino-acid chain: Phosphoglycolate phosphatase (232 aa).

Asp-8 functions as the Nucleophile in the catalytic mechanism. The Mg(2+) site is built by Asp-8 and Asp-10. Lys-156 lines the substrate pocket. Residues Asp-179 and Asp-183 each contribute to the Mg(2+) site.

Belongs to the archaeal SPP-like hydrolase family. Mg(2+) serves as cofactor.

It carries out the reaction 2-phosphoglycolate + H2O = glycolate + phosphate. Functionally, catalyzes the dephosphorylation of 2-phosphoglycolate. The polypeptide is Phosphoglycolate phosphatase (Methanopyrus kandleri (strain AV19 / DSM 6324 / JCM 9639 / NBRC 100938)).